A 198-amino-acid polypeptide reads, in one-letter code: Potassium-transporting ATPase KdpC subunit (198 aa).

A helical membrane pass occupies residues 8–28; that stretch reads ILAVLVFTILCGIIYPVSTTV.

Belongs to the KdpC family. As to quaternary structure, the system is composed of three essential subunits: KdpA, KdpB and KdpC.

The protein resides in the cell membrane. In terms of biological role, part of the high-affinity ATP-driven potassium transport (or Kdp) system, which catalyzes the hydrolysis of ATP coupled with the electrogenic transport of potassium into the cytoplasm. This subunit acts as a catalytic chaperone that increases the ATP-binding affinity of the ATP-hydrolyzing subunit KdpB by the formation of a transient KdpB/KdpC/ATP ternary complex. The sequence is that of Potassium-transporting ATPase KdpC subunit from Clostridium perfringens (strain ATCC 13124 / DSM 756 / JCM 1290 / NCIMB 6125 / NCTC 8237 / Type A).